We begin with the raw amino-acid sequence, 112 residues long: Putative galactitol utilization operon repressor (112 aa).

One can recognise an HTH deoR-type domain in the interval 5 to 60 (SFERRNKIIQLVNEQGTVLVQDLAGVFAASEATIRADLRFLEQKGVVTRFHGGAAK). Residues 22-41 (VLVQDLAGVFAASEATIRAD) constitute a DNA-binding region (H-T-H motif).

Its function is as follows. Repressor of the gat operon for galacticol transport and metabolism. In K12 strains the operon is constitutively expressed because this gene is inactive. The chain is Putative galactitol utilization operon repressor (gatR) from Escherichia coli (strain K12).